The following is a 550-amino-acid chain: Chaperonin GroEL 2 (550 aa).

ATP is bound by residues 30 to 33, Lys-51, 87 to 91, Gly-415, and Asp-496; these read TLGP and DGTTT.

It belongs to the chaperonin (HSP60) family. In terms of assembly, forms a cylinder of 14 subunits composed of two heptameric rings stacked back-to-back. Interacts with the co-chaperonin GroES.

The protein resides in the cytoplasm. It carries out the reaction ATP + H2O + a folded polypeptide = ADP + phosphate + an unfolded polypeptide.. Functionally, together with its co-chaperonin GroES, plays an essential role in assisting protein folding. The GroEL-GroES system forms a nano-cage that allows encapsulation of the non-native substrate proteins and provides a physical environment optimized to promote and accelerate protein folding. This Bradyrhizobium diazoefficiens (strain JCM 10833 / BCRC 13528 / IAM 13628 / NBRC 14792 / USDA 110) protein is Chaperonin GroEL 2.